We begin with the raw amino-acid sequence, 190 residues long: Small ribosomal subunit protein eS7 (190 aa).

It belongs to the eukaryotic ribosomal protein eS7 family.

The polypeptide is Small ribosomal subunit protein eS7 (RPS7) (Avicennia marina (Grey mangrove)).